Consider the following 128-residue polypeptide: Phycoerythrin alpha-3 chain, chloroplastic (128 aa).

A chloroplast-targeting transit peptide spans 1-52 (MFAKTLASLAVIGSAAAYVPMMSMDMGRREVVQAGAAAAAVTPFLSGAPAGA). Residue K56 is modified to 5-hydroxylysine. Residues 70 to 89 (GCSRAPKESTGGKAGGQDDE) form a disordered region. Residues C71, R73, 77-78 (ES), and K93 contribute to the 15,16-dihydrobiliverdin site.

It belongs to the phycoerythrin family. As to quaternary structure, heterotetramer of 2 different alpha chains and 2 identical beta chains. The subunit composition could comprise of any combination of 2 out of 4 different alpha units with an invariant beta unit. In terms of processing, contains one covalently linked 15,16-dihydrobiliverdin chromophore.

It is found in the plastid. It localises to the chloroplast thylakoid membrane. Functionally, light-harvesting photosynthetic tetrapyrrole chromophore-protein from the phycobiliprotein complex. The sequence is that of Phycoerythrin alpha-3 chain, chloroplastic (cpeA3) from Rhodomonas sp. (strain CS 24) (Chroomonas sp. (strain CS24)).